Consider the following 358-residue polypeptide: Cytochrome c peroxidase, mitochondrial (358 aa).

Residues 1–38 (MAASRTATRTLRALRTSTRPALTAAPRAAFRQGGRRLY) constitute a mitochondrion transit peptide. Histidine 119 functions as the Proton acceptor in the catalytic mechanism. The interval 192–214 (PYRPGRQDRDAAGCTPDGRLPDA) is disordered. A heme b-binding site is contributed by histidine 242. The active-site Tryptophan radical intermediate is tryptophan 258.

This sequence belongs to the peroxidase family. Cytochrome c peroxidase subfamily. As to quaternary structure, forms a one-to-one complex with cytochrome c. Requires heme b as cofactor.

Its subcellular location is the mitochondrion matrix. It is found in the mitochondrion intermembrane space. It carries out the reaction 2 Fe(II)-[cytochrome c] + H2O2 + 2 H(+) = 2 Fe(III)-[cytochrome c] + 2 H2O. In terms of biological role, destroys radicals which are normally produced within the cells and which are toxic to biological systems. In Neurospora crassa (strain ATCC 24698 / 74-OR23-1A / CBS 708.71 / DSM 1257 / FGSC 987), this protein is Cytochrome c peroxidase, mitochondrial (ccp-1).